A 589-amino-acid polypeptide reads, in one-letter code: Phosphoenolpyruvate carboxykinase [GTP] (589 aa).

Substrate contacts are provided by residues arginine 75 and 207 to 209; that span reads YGG. Mn(2+) contacts are provided by lysine 216 and histidine 236. Serine 258 lines the substrate pocket. 259–264 provides a ligand contact to GTP; it reads ASGKTN. Serine 260 is a catalytic residue. Mn(2+) is bound at residue aspartate 287. 374–376 serves as a coordination point for substrate; that stretch reads NSR. Residues arginine 376, arginine 407, and 500 to 503 contribute to the GTP site; that span reads FAEN.

It belongs to the phosphoenolpyruvate carboxykinase [GTP] family. Mn(2+) is required as a cofactor.

The protein resides in the cytoplasm. The enzyme catalyses oxaloacetate + GTP = phosphoenolpyruvate + GDP + CO2. The protein operates within carbohydrate biosynthesis; gluconeogenesis. In terms of biological role, catalyzes the conversion of oxaloacetate (OAA) to phosphoenolpyruvate (PEP), the rate-limiting step in the metabolic pathway that produces glucose from lactate and other precursors derived from the citric acid cycle. The polypeptide is Phosphoenolpyruvate carboxykinase [GTP] (Thermoplasma volcanium (strain ATCC 51530 / DSM 4299 / JCM 9571 / NBRC 15438 / GSS1)).